We begin with the raw amino-acid sequence, 27 residues long: Antimicrobial peptide 1 (27 aa).

As to expression, expressed by the skin glands.

It localises to the secreted. Its function is as follows. Has very weak antimicrobial activity against Gram-positive bacterium S.aureus and Gram-negative bacterium E.coli and stronger activity against yeast C.albicans. Enhances the antibacterial activity of XT3. Has hemolytic activity against human red blood cells. The polypeptide is Antimicrobial peptide 1 (Xenopus tropicalis (Western clawed frog)).